Here is a 150-residue protein sequence, read N- to C-terminus: Probable antibacterial peptide (150 aa).

The signal sequence occupies residues 1-19 (MHIARFCLLSSMAVLALSA).

The protein resides in the secreted. Has antibacterial activity in vitro. The protein is Probable antibacterial peptide of Riptortus clavatus (Bean bug).